The sequence spans 218 residues: Thiopurine S-methyltransferase (218 aa).

4 residues coordinate S-adenosyl-L-methionine: tryptophan 10, leucine 45, glutamate 66, and arginine 123.

Belongs to the class I-like SAM-binding methyltransferase superfamily. TPMT family.

Its subcellular location is the cytoplasm. It carries out the reaction S-adenosyl-L-methionine + a thiopurine = S-adenosyl-L-homocysteine + a thiopurine S-methylether.. Its function is as follows. Involved in the biological cycling of tellurium and selenium. Tellurium resistance (Ter) mechanism. This chain is Thiopurine S-methyltransferase, found in Pseudomonas syringae pv. pisi.